The following is a 53-amino-acid chain: Minor histocompatibility protein HMSD variant form (53 aa).

ACC-6 forms a complex with MHC HLA-B*4403. As to expression, highly expressed in dendritic cells and primary leukemia cells, especially those of myeloid lineage. ACC-6 expression is limited to cells of the hematopoietic lineage.

This splice variant of HMSD is the precursor of the histocompatibility antigen ACC-6. More generally, minor histocompatibility antigens (mHags) refer to immunogenic peptide which, when complexed with MHC, can generate an immune response after recognition by specific T-cells. The peptides are derived from polymorphic intracellular proteins, which are cleaved by normal pathways of antigen processing. The binding of these peptides to MHC class I or class II molecules and its expression on the cell surface can stimulate T-cell responses and thereby trigger graft rejection or graft-versus-host disease (GVHD) after hematopoietic stem cell transplantation from HLA-identical sibling donor. GVHD is a frequent complication after bone marrow transplantation (BMT), due to mismatch of minor histocompatibility antigen in HLA-matched sibling marrow transplants. However, associated with GVHD, a favorable graft-versus-leukemia (GVL) can be induced by donor-recipient disparities in mHags. ACC-6 is presented to the cell surface by MHC HLA-B*4403. This complex specifically elicits donor-cytotoxic T-lymphocyte (CTL) reactivity against hematologic malignancies after treatment by HLA-identical allogenic BMT. It induces cell recognition and lysis by CTL. Immunogenicity of most autosomal mHags results from single-nucleotide polymorphisms that cause amino-acid substitutions within epitopes, leading to the differential recognition of peptides between donor and recipient. The polypeptide is Minor histocompatibility protein HMSD variant form (HMSD) (Homo sapiens (Human)).